The sequence spans 154 residues: Myoglobin (154 aa).

The 147-residue stretch at 2-148 folds into the Globin domain; sequence GLSDQEWQQV…FRNDMASKYK (147 aa). Nitrite is bound at residue His65. His65 lines the O2 pocket. His94 contributes to the heme b binding site.

This sequence belongs to the globin family. In terms of assembly, monomeric.

It localises to the cytoplasm. The protein resides in the sarcoplasm. It carries out the reaction Fe(III)-heme b-[protein] + nitric oxide + H2O = Fe(II)-heme b-[protein] + nitrite + 2 H(+). The catalysed reaction is H2O2 + AH2 = A + 2 H2O. Its function is as follows. Monomeric heme protein which primary function is to store oxygen and facilitate its diffusion within muscle tissues. Reversibly binds oxygen through a pentacoordinated heme iron and enables its timely and efficient release as needed during periods of heightened demand. Depending on the oxidative conditions of tissues and cells, and in addition to its ability to bind oxygen, it also has a nitrite reductase activity whereby it regulates the production of bioactive nitric oxide. Under stress conditions, like hypoxia and anoxia, it also protects cells against reactive oxygen species thanks to its pseudoperoxidase activity. The polypeptide is Myoglobin (MB) (Cerorhinca monocerata (Rhinoceros auklet)).